A 600-amino-acid chain; its full sequence is uncharacterized protein (600 aa).

4Fe-4S ferredoxin-type domains are found at residues 14–44 (RLAI…MGEK) and 53–82 (GKPV…IIGL). ABC transporter domains lie at 77–318 (ISII…YLYG) and 348–563 (LLSY…LKEM). Residues 117–124 (GQNGIGKS) and 380–387 (GPNGIGKT) contribute to the ATP site. A compositionally biased stretch (basic and acidic residues) spans 569 to 594 (RDPETGRPRANKEGSQRDIMQKEKGE). Residues 569–600 (RDPETGRPRANKEGSQRDIMQKEKGEYYYVDE) form a disordered region.

It belongs to the ABC transporter superfamily.

This is an uncharacterized protein from Methanocaldococcus jannaschii (strain ATCC 43067 / DSM 2661 / JAL-1 / JCM 10045 / NBRC 100440) (Methanococcus jannaschii).